A 419-amino-acid chain; its full sequence is L-rhamnose isomerase (419 aa).

Mn(2+) contacts are provided by histidine 262, aspartate 294, and aspartate 296.

Belongs to the rhamnose isomerase family. As to quaternary structure, homotetramer. The cofactor is Mn(2+).

The protein localises to the cytoplasm. The enzyme catalyses L-rhamnopyranose = L-rhamnulose. It functions in the pathway carbohydrate degradation; L-rhamnose degradation; glycerone phosphate from L-rhamnose: step 1/3. Its function is as follows. Catalyzes the interconversion of L-rhamnose and L-rhamnulose. This is L-rhamnose isomerase from Salmonella paratyphi A (strain AKU_12601).